The chain runs to 162 residues: SsrA-binding protein (162 aa).

Over residues 137-154 the composition is skewed to basic and acidic residues; it reads HDKREDTKAREWDREKAR. The tract at residues 137–162 is disordered; that stretch reads HDKREDTKAREWDREKARIMKNKHRG.

Belongs to the SmpB family.

It is found in the cytoplasm. In terms of biological role, required for rescue of stalled ribosomes mediated by trans-translation. Binds to transfer-messenger RNA (tmRNA), required for stable association of tmRNA with ribosomes. tmRNA and SmpB together mimic tRNA shape, replacing the anticodon stem-loop with SmpB. tmRNA is encoded by the ssrA gene; the 2 termini fold to resemble tRNA(Ala) and it encodes a 'tag peptide', a short internal open reading frame. During trans-translation Ala-aminoacylated tmRNA acts like a tRNA, entering the A-site of stalled ribosomes, displacing the stalled mRNA. The ribosome then switches to translate the ORF on the tmRNA; the nascent peptide is terminated with the 'tag peptide' encoded by the tmRNA and targeted for degradation. The ribosome is freed to recommence translation, which seems to be the essential function of trans-translation. This chain is SsrA-binding protein, found in Aeromonas hydrophila subsp. hydrophila (strain ATCC 7966 / DSM 30187 / BCRC 13018 / CCUG 14551 / JCM 1027 / KCTC 2358 / NCIMB 9240 / NCTC 8049).